We begin with the raw amino-acid sequence, 571 residues long: Oxysterol-binding protein 11 (571 aa).

A disordered region spans residues 1 to 73 (MSNFFKKLVK…IGEQIDTLDD (73 aa)). Residues 33 to 42 (NGNQVVPDTA) show a composition bias toward polar residues. Positions 43–54 (SSYSDDSNSLSD) are enriched in low complexity. A coiled-coil region spans residues 387-420 (YLEREENKLANKEKNKIEEREREKRKTRESRKEI).

Belongs to the OSBP family.

The protein is Oxysterol-binding protein 11 (osbK) of Dictyostelium discoideum (Social amoeba).